We begin with the raw amino-acid sequence, 365 residues long: D-alanine--D-alanine ligase (365 aa).

An ATP-grasp domain is found at 135–345 (KLLLKSFNIP…YESLVDNLVS (211 aa)). 168-223 (KQSLNYPVIVKPAMLGSSIGISIAYNDTQIEKCIEEAFEYDLTVVVEKFMKVREIE) is a binding site for ATP. Residues Asp-298, Glu-312, and Asn-314 each contribute to the Mg(2+) site.

The protein belongs to the D-alanine--D-alanine ligase family. Requires Mg(2+) as cofactor. It depends on Mn(2+) as a cofactor.

It localises to the cytoplasm. It carries out the reaction 2 D-alanine + ATP = D-alanyl-D-alanine + ADP + phosphate + H(+). The protein operates within cell wall biogenesis; peptidoglycan biosynthesis. Functionally, cell wall formation. This chain is D-alanine--D-alanine ligase, found in Borrelia hermsii (strain HS1 / DAH).